A 795-amino-acid polypeptide reads, in one-letter code: Phenylalanine--tRNA ligase beta subunit (795 aa).

Positions 39 to 148 (AGSFHGVVVG…ADAPIGTDIR (110 aa)) constitute a tRNA-binding domain. The B5 domain maps to 401–476 (PKRATITLRR…RVYGYNNIPD (76 aa)). Residues Asp-454, Asp-460, Glu-463, and Glu-464 each coordinate Mg(2+). Residues 701-794 (SRFPANRRDI…LKERFQASLR (94 aa)) enclose the FDX-ACB domain.

The protein belongs to the phenylalanyl-tRNA synthetase beta subunit family. Type 1 subfamily. In terms of assembly, tetramer of two alpha and two beta subunits. Mg(2+) is required as a cofactor.

The protein resides in the cytoplasm. It catalyses the reaction tRNA(Phe) + L-phenylalanine + ATP = L-phenylalanyl-tRNA(Phe) + AMP + diphosphate + H(+). In Shigella dysenteriae serotype 1 (strain Sd197), this protein is Phenylalanine--tRNA ligase beta subunit.